The chain runs to 429 residues: Adenosylhomocysteinase (429 aa).

Substrate-binding residues include Thr64, Asp136, and Glu161. Residue 162–164 (TTT) participates in NAD(+) binding. Residues Lys191 and Asp195 each contribute to the substrate site. Residues Asn196, 225-230 (GYGWCG), Glu248, Asn283, 304-306 (SGH), and Asn351 contribute to the NAD(+) site.

Belongs to the adenosylhomocysteinase family. NAD(+) serves as cofactor.

It is found in the cytoplasm. The enzyme catalyses S-adenosyl-L-homocysteine + H2O = L-homocysteine + adenosine. It participates in amino-acid biosynthesis; L-homocysteine biosynthesis; L-homocysteine from S-adenosyl-L-homocysteine: step 1/1. May play a key role in the regulation of the intracellular concentration of adenosylhomocysteine. The chain is Adenosylhomocysteinase from Gloeothece citriformis (strain PCC 7424) (Cyanothece sp. (strain PCC 7424)).